Consider the following 102-residue polypeptide: MNINIILYSSRIQQGGLNMSNETFNRVSEILRHIMEDNSVPRNIRRAAEESNEILNNPDEDSTVRASTVISILDEISNDPNIPIHARTLVWEILSELESIRE.

It belongs to the UPF0147 family.

The protein is UPF0147 protein MTH_1407 of Methanothermobacter thermautotrophicus (strain ATCC 29096 / DSM 1053 / JCM 10044 / NBRC 100330 / Delta H) (Methanobacterium thermoautotrophicum).